Reading from the N-terminus, the 256-residue chain is (E)-benzylidenesuccinyl-CoA hydratase (256 aa).

Residue glutamate 110 is the Nucleophile of the active site. Glutamate 130 acts as the Proton acceptor in catalysis.

Belongs to the enoyl-CoA hydratase/isomerase family. As to quaternary structure, homotrimer.

It catalyses the reaction (2S)-[(R)-hydroxy(phenyl)methyl]succinyl-CoA = (E)-2-benzylidenesuccinyl-CoA + H2O. The protein operates within xenobiotic degradation; toluene degradation. Its function is as follows. Involved in an anaerobic toluene degradation pathway. Catalyzes the hydration of (E)-2-benzylidenesuccinyl-CoA to the corresponding alcohol intermediate, 2-(alpha-hydroxybenzyl)succinyl-CoA. Also accepts the N-acetylcysteamine (NAC) thioester of (E)-benzylidenesuccinate. The protein is (E)-benzylidenesuccinyl-CoA hydratase of Thauera aromatica.